Here is a 535-residue protein sequence, read N- to C-terminus: Formate--tetrahydrofolate ligase (535 aa).

Residue 50–57 (TPAGEGKT) coordinates ATP.

This sequence belongs to the formate--tetrahydrofolate ligase family.

The catalysed reaction is (6S)-5,6,7,8-tetrahydrofolate + formate + ATP = (6R)-10-formyltetrahydrofolate + ADP + phosphate. The protein operates within one-carbon metabolism; tetrahydrofolate interconversion. The chain is Formate--tetrahydrofolate ligase from Picrophilus torridus (strain ATCC 700027 / DSM 9790 / JCM 10055 / NBRC 100828 / KAW 2/3).